Reading from the N-terminus, the 343-residue chain is N-acetyl-gamma-glutamyl-phosphate reductase (343 aa).

The active site involves C149.

Belongs to the NAGSA dehydrogenase family. Type 1 subfamily.

It localises to the cytoplasm. The catalysed reaction is N-acetyl-L-glutamate 5-semialdehyde + phosphate + NADP(+) = N-acetyl-L-glutamyl 5-phosphate + NADPH + H(+). The protein operates within amino-acid biosynthesis; L-arginine biosynthesis; N(2)-acetyl-L-ornithine from L-glutamate: step 3/4. Catalyzes the NADPH-dependent reduction of N-acetyl-5-glutamyl phosphate to yield N-acetyl-L-glutamate 5-semialdehyde. This Methanococcus maripaludis (strain C5 / ATCC BAA-1333) protein is N-acetyl-gamma-glutamyl-phosphate reductase.